A 258-amino-acid polypeptide reads, in one-letter code: UPF0246 protein YaaA (258 aa).

It belongs to the UPF0246 family.

In Shigella dysenteriae serotype 1 (strain Sd197), this protein is UPF0246 protein YaaA.